The primary structure comprises 708 residues: tRNA(Met) cytidine acetyltransferase TmcA (708 aa).

Residues glutamine 189, 215-224, and arginine 357 contribute to the ATP site; that span reads GRGKTSALGL. The N-acetyltransferase domain maps to 398–574; it reads PECVEQPERL…YSLLMVRGEH (177 aa). Residues 502–504 and 509–515 each bind acetyl-CoA; these read IAV and QRQGIGS.

This sequence belongs to the RNA cytidine acetyltransferase family. TmcA subfamily.

It is found in the cytoplasm. It carries out the reaction cytidine(34) in elongator tRNA(Met) + acetyl-CoA + ATP + H2O = N(4)-acetylcytidine(34) in elongator tRNA(Met) + ADP + phosphate + CoA + H(+). Catalyzes the formation of N(4)-acetylcytidine (ac(4)C) at the wobble position of tRNA(Met), by using acetyl-CoA as an acetyl donor and ATP (or GTP). This chain is tRNA(Met) cytidine acetyltransferase TmcA, found in Vibrio cholerae serotype O1 (strain ATCC 39315 / El Tor Inaba N16961).